A 405-amino-acid polypeptide reads, in one-letter code: MQVYLVGGAVRDKLLERPVKDKDWVVVGASEADMLAKGFQQVGKDFPVFLHPKTQQEYALARTERKIGQGYAGFECDTSTNVTLEQDLLRRDLTVNAMAMDDNGNIIDPFNGQKDLRNRVLRHVSDAFEEDPLRVLRVARFAARYASYGFSIADETKTLMANITQSGELSHLSAERVWVETAKSLLEDTPQIYFETLRECGALKVWFAELDCLWGIPNPAKWHPEIDTGIHSMMVLEQSVRVSHKLSVRFAALVHDLGKGLTPPEEWPSHRGHEKRGLVPINTLCERLKVPNDCRDLALLMSEFHSHVHHAFKLKAATINDFLDKCDVWRKPERFADLLLACTADAKGRTGFEERPYPNADYIWQAYLLAKEVNVQEIVQAGYKGAEIKQQLRQKRIHAIATNVA.

Residues glycine 8 and arginine 11 each contribute to the ATP site. CTP contacts are provided by glycine 8 and arginine 11. Residues aspartate 21 and aspartate 23 each coordinate Mg(2+). Positions 91, 137, and 140 each coordinate ATP. Residues arginine 91, arginine 137, and arginine 140 each coordinate CTP. Residues 228-329 (TGIHSMMVLE…NDFLDKCDVW (102 aa)) enclose the HD domain.

It belongs to the tRNA nucleotidyltransferase/poly(A) polymerase family. Bacterial CCA-adding enzyme type 1 subfamily. Monomer. Can also form homodimers and oligomers. Mg(2+) is required as a cofactor. Requires Ni(2+) as cofactor.

The enzyme catalyses a tRNA precursor + 2 CTP + ATP = a tRNA with a 3' CCA end + 3 diphosphate. The catalysed reaction is a tRNA with a 3' CCA end + 2 CTP + ATP = a tRNA with a 3' CCACCA end + 3 diphosphate. In terms of biological role, catalyzes the addition and repair of the essential 3'-terminal CCA sequence in tRNAs without using a nucleic acid template. Adds these three nucleotides in the order of C, C, and A to the tRNA nucleotide-73, using CTP and ATP as substrates and producing inorganic pyrophosphate. tRNA 3'-terminal CCA addition is required both for tRNA processing and repair. Also involved in tRNA surveillance by mediating tandem CCA addition to generate a CCACCA at the 3' terminus of unstable tRNAs. While stable tRNAs receive only 3'-terminal CCA, unstable tRNAs are marked with CCACCA and rapidly degraded. This is Multifunctional CCA protein from Pseudoalteromonas atlantica (strain T6c / ATCC BAA-1087).